Reading from the N-terminus, the 365-residue chain is Chorismate synthase (365 aa).

NADP(+) contacts are provided by R48 and R54. FMN is bound by residues 131 to 133 (RSS), 243 to 244 (NA), G288, 303 to 307 (KPTSS), and R329.

Belongs to the chorismate synthase family. As to quaternary structure, homotetramer. FMNH2 is required as a cofactor.

The catalysed reaction is 5-O-(1-carboxyvinyl)-3-phosphoshikimate = chorismate + phosphate. Its pathway is metabolic intermediate biosynthesis; chorismate biosynthesis; chorismate from D-erythrose 4-phosphate and phosphoenolpyruvate: step 7/7. Functionally, catalyzes the anti-1,4-elimination of the C-3 phosphate and the C-6 proR hydrogen from 5-enolpyruvylshikimate-3-phosphate (EPSP) to yield chorismate, which is the branch point compound that serves as the starting substrate for the three terminal pathways of aromatic amino acid biosynthesis. This reaction introduces a second double bond into the aromatic ring system. The protein is Chorismate synthase of Rhizobium etli (strain ATCC 51251 / DSM 11541 / JCM 21823 / NBRC 15573 / CFN 42).